Consider the following 224-residue polypeptide: Ankyrin repeat domain-containing protein 45 (224 aa).

ANK repeat units lie at residues 46–76 (VGRN…DVNE) and 80–109 (RGYS…DFQA).

Widely expressed.

Its subcellular location is the cytoplasm. The protein resides in the midbody. It localises to the midbody ring. The protein localises to the cleavage furrow. Functionally, may play a role during cell division. In Danio rerio (Zebrafish), this protein is Ankyrin repeat domain-containing protein 45.